A 61-amino-acid chain; its full sequence is Metallothionein-1H (61 aa).

The residue at position 1 (Met1) is an N-acetylmethionine. The segment at 1–29 is beta; the sequence is MDPNCSCEAGGSCACAGSCKCKKCKCTSC. Positions 5, 7, 13, 15, 19, 21, 24, 26, 29, 33, 34, 36, 37, 41, 44, 48, 50, and 57 each coordinate a divalent metal cation. Residues 30–61 form an alpha region; sequence KKSCCSCCPLGCAKCAQGCICKGASEKCSCCA. The residue at position 58 (Ser58) is a Phosphoserine. Positions 59 and 60 each coordinate a divalent metal cation.

This sequence belongs to the metallothionein superfamily. Type 1 family. Monomer.

Metallothioneins have a high content of cysteine residues that bind various heavy metals; these proteins are transcriptionally regulated by both heavy metals and glucocorticoids. The protein is Metallothionein-1H (MT1H) of Homo sapiens (Human).